The following is a 309-amino-acid chain: Aspartate carbamoyltransferase catalytic subunit (309 aa).

Carbamoyl phosphate-binding residues include R58 and T59. K86 is an L-aspartate binding site. 3 residues coordinate carbamoyl phosphate: R108, H136, and Q139. Residues R170 and R224 each contribute to the L-aspartate site. Positions 266 and 267 each coordinate carbamoyl phosphate.

This sequence belongs to the aspartate/ornithine carbamoyltransferase superfamily. ATCase family. In terms of assembly, heterododecamer (2C3:3R2) of six catalytic PyrB chains organized as two trimers (C3), and six regulatory PyrI chains organized as three dimers (R2).

It catalyses the reaction carbamoyl phosphate + L-aspartate = N-carbamoyl-L-aspartate + phosphate + H(+). The protein operates within pyrimidine metabolism; UMP biosynthesis via de novo pathway; (S)-dihydroorotate from bicarbonate: step 2/3. Its function is as follows. Catalyzes the condensation of carbamoyl phosphate and aspartate to form carbamoyl aspartate and inorganic phosphate, the committed step in the de novo pyrimidine nucleotide biosynthesis pathway. This is Aspartate carbamoyltransferase catalytic subunit from Campylobacter curvus (strain 525.92).